Here is a 280-residue protein sequence, read N- to C-terminus: UPF0276 protein NMA0228 (280 aa).

Belongs to the UPF0276 family.

The chain is UPF0276 protein NMA0228 from Neisseria meningitidis serogroup A / serotype 4A (strain DSM 15465 / Z2491).